Consider the following 322-residue polypeptide: MAAPPSPGRTADQADQVCTFLFKKPGRKGAAGLRKRPACDPEHGESSSSGDEGDTVAQPPRVAPRPRGLHSWQKAAHGDRRGEEAAPESLDVVYRSTRSAKPVGPEDMGATADFEQDTEKEHHTPTILKCSQRVQEALRGREHDHIYRGIHSYLRYLKPKDTSMGNSSSGMARKGPIRAPGHLRATVRWDYQPDICKDYKETGFCGFGDSCKFLHDRSDYKLGWEIERELEEGRYCICEDENHEVGSEEEEIPFRCFICRQAFQNPVVTKCRHYFCESCALEHFRATPRCYICDQPTGGIFNPAKELMAKLQKLQAAEGKKR.

The segment at Lys24–Val92 is disordered. Low complexity predominate over residues Ser46 to Pro60. Residues Asp190–Ser218 form a C3H1-type zinc finger. The RING-type zinc finger occupies Cys256 to Asp294.

The protein is RING finger protein 113B (RNF113B) of Homo sapiens (Human).